Reading from the N-terminus, the 165-residue chain is Transcriptional repressor NrdR (165 aa).

The segment at 3–34 (CPYCGQLNNRVVDSRLSRSEFAVRRRRECLDC) is a zinc-finger region. The ATP-cone domain occupies 49 to 139 (VMVVKKDGRR…VYREFKDVDD (91 aa)).

This sequence belongs to the NrdR family. Zn(2+) serves as cofactor.

Its function is as follows. Negatively regulates transcription of bacterial ribonucleotide reductase nrd genes and operons by binding to NrdR-boxes. This is Transcriptional repressor NrdR from Desulforapulum autotrophicum (strain ATCC 43914 / DSM 3382 / VKM B-1955 / HRM2) (Desulfobacterium autotrophicum).